The primary structure comprises 755 residues: Periplasmic nitrate reductase (755 aa).

A signal peptide (tat-type signal) is located at residues 1–32; that stretch reads MSTSRRDFLKYFAMSAAVAAASGAGFGSLALA. One can recognise a 4Fe-4S Mo/W bis-MGD-type domain in the interval 38 to 93; it reads EKWVKGVCRYCGTGCGVLVGVKDGKAVAIQGDPNNHNAGLLCLKGSLLIPVLNSKE. Cys45, Cys48, Cys52, and Cys79 together coordinate [4Fe-4S] cluster. Residues Lys81, Gln143, Asn168, Cys172, 208–212, 236–238, 255–257, Met340, Gln344, Asn450, 475–477, and 647–656 contribute to the Mo-bis(molybdopterin guanine dinucleotide) site; these read NTSEA, DPR, GTD, IEA, and SMRVIDHWHT. Substrate contacts are provided by residues 648-653 and Phe721; that span reads MRVIDH. Residues Asn729 and Lys746 each coordinate Mo-bis(molybdopterin guanine dinucleotide).

It belongs to the prokaryotic molybdopterin-containing oxidoreductase family. NasA/NapA/NarB subfamily. In terms of assembly, monomer. Component of the periplasmic nitrate reductase NapAB complex composed of NapA and NapB. [4Fe-4S] cluster serves as cofactor. Requires Mo-bis(molybdopterin guanine dinucleotide) as cofactor. Predicted to be exported by the Tat system. The position of the signal peptide cleavage has been experimentally proven.

The protein localises to the periplasm. It carries out the reaction 2 Fe(II)-[cytochrome] + nitrate + 2 H(+) = 2 Fe(III)-[cytochrome] + nitrite + H2O. Activated by potassium and sodium ions and inhibited by magnesium and calcium ions. In terms of biological role, catalytic subunit of the periplasmic nitrate reductase complex NapAB. Receives electrons from NapB and catalyzes the reduction of nitrate to nitrite. The sequence is that of Periplasmic nitrate reductase from Desulfovibrio desulfuricans (strain ATCC 27774 / DSM 6949 / MB).